We begin with the raw amino-acid sequence, 239 residues long: tRNA (guanine-N(7)-)-methyltransferase (239 aa).

Residues E69, E94, D121, and D144 each coordinate S-adenosyl-L-methionine. Residue D144 is part of the active site. K148 lines the substrate pocket. The segment at 150 to 155 (RHNKRR) is interaction with RNA. Residues D180 and 217 to 220 (TKFE) contribute to the substrate site.

It belongs to the class I-like SAM-binding methyltransferase superfamily. TrmB family. Monomer.

The catalysed reaction is guanosine(46) in tRNA + S-adenosyl-L-methionine = N(7)-methylguanosine(46) in tRNA + S-adenosyl-L-homocysteine. It participates in tRNA modification; N(7)-methylguanine-tRNA biosynthesis. In terms of biological role, catalyzes the formation of N(7)-methylguanine at position 46 (m7G46) in tRNA. The protein is tRNA (guanine-N(7)-)-methyltransferase of Serratia proteamaculans (strain 568).